We begin with the raw amino-acid sequence, 690 residues long: Eukaryotic translation initiation factor 3 subunit B (690 aa).

The segment covering 1 to 11 has biased composition (basic and acidic residues); that stretch reads MAKKKSEEHSG. A disordered region spans residues 1-33; that stretch reads MAKKKSEEHSGTDANDSDYQEEPNFDDPPGFVD. Acidic residues predominate over residues 15-25; the sequence is NDSDYQEEPNF. In terms of domain architecture, RRM spans 57–141; that stretch reads SVVVVDNIPK…HTFAVNLFTD (85 aa). 5 WD repeats span residues 207–246, 293–331, 334–369, 442–484, and 530–575; these read TRER…KIQK, DGMS…LLDL, IKIP…TLME, EIRE…KPSL, and PDHF…IKRT. Residues 595–645 are a coiled coil; the sequence is EEKQKEIKKNLKKYYAAFEQKDRLRLTRASKELLEKRSQLRETFMEYRNKR.

It belongs to the eIF-3 subunit B family. As to quaternary structure, component of the eukaryotic translation initiation factor 3 (eIF-3) complex. The eIF-3 complex interacts with pix. Interacts with mxt.

The protein resides in the cytoplasm. Functionally, RNA-binding component of the eukaryotic translation initiation factor 3 (eIF-3) complex, which is involved in protein synthesis of a specialized repertoire of mRNAs and, together with other initiation factors, stimulates binding of mRNA and methionyl-tRNAi to the 40S ribosome. The eIF-3 complex specifically targets and initiates translation of a subset of mRNAs involved in cell proliferation. In Drosophila melanogaster (Fruit fly), this protein is Eukaryotic translation initiation factor 3 subunit B.